The following is a 330-amino-acid chain: Aspartate--ammonia ligase (330 aa).

It belongs to the class-II aminoacyl-tRNA synthetase family. AsnA subfamily.

The protein localises to the cytoplasm. The catalysed reaction is L-aspartate + NH4(+) + ATP = L-asparagine + AMP + diphosphate + H(+). It functions in the pathway amino-acid biosynthesis; L-asparagine biosynthesis; L-asparagine from L-aspartate (ammonia route): step 1/1. This chain is Aspartate--ammonia ligase, found in Klebsiella pneumoniae subsp. pneumoniae (strain ATCC 700721 / MGH 78578).